Here is a 313-residue protein sequence, read N- to C-terminus: Pseudouridine-5'-phosphate glycosidase (313 aa).

The active-site Proton donor is Glu34. Substrate-binding residues include Lys95 and Val115. Asp147 is a binding site for Mn(2+). Residue Ser149–Asp151 coordinates substrate. Lys168 (nucleophile) is an active-site residue.

The protein belongs to the pseudouridine-5'-phosphate glycosidase family. In terms of assembly, homotrimer. Requires Mn(2+) as cofactor.

The enzyme catalyses D-ribose 5-phosphate + uracil = psi-UMP + H2O. Its function is as follows. Catalyzes the reversible cleavage of pseudouridine 5'-phosphate (PsiMP) to ribose 5-phosphate and uracil. Functions biologically in the cleavage direction, as part of a pseudouridine degradation pathway. In Deinococcus radiodurans (strain ATCC 13939 / DSM 20539 / JCM 16871 / CCUG 27074 / LMG 4051 / NBRC 15346 / NCIMB 9279 / VKM B-1422 / R1), this protein is Pseudouridine-5'-phosphate glycosidase.